We begin with the raw amino-acid sequence, 557 residues long: ADP-ribosylation factor-binding protein GGA1 (557 aa).

A VHS domain is found at A29–P165. The GAT domain occupies E192–G317. T348 bears the Phosphothreonine mark. A phosphoserine mark is found at S353, S357, S378, and S394. The 117-residue stretch at A440 to T556 folds into the GAE domain.

In terms of assembly, binds to ARF1 and ARF2.

It is found in the golgi apparatus. The protein resides in the trans-Golgi network. Functionally, may play a role in the regulation of membrane traffic through the trans-Golgi network. The protein is ADP-ribosylation factor-binding protein GGA1 (GGA1) of Saccharomyces cerevisiae (strain ATCC 204508 / S288c) (Baker's yeast).